We begin with the raw amino-acid sequence, 404 residues long: MCSIGEDDFGDEGGTHAMLPSCSETGIVLRAGDCSKCGQSSQQLYKLNFRSAECSECFLKYVRHKFRAALGAAKVLPRNAEILLVIDGSSESLVLLDMVHFAQTQNTFKRLHCNARVLYVDAHCSPIKEEESPLLALNELQRRYEPFEFYVIQLNGDPQSLQLLKDYTVRQLDSILDQFNSSTSRQDYMQQKRKFLVGGVAMKLKCSHVFEPSISPSLATQLLTSVALGRGASVALDVALLDDRLMGDVKLLRPLKDLNDQEVQFYVHAKELKAFRVDDPSHYPLSGGSLQSLTRDFVANLQLNYASTVSTVFRTGDKIAPKRNSKEIMASYCALCQSLLDNNISDTLLAIEYSRAVSEVGVELKMKSSCDVLEQRVLERLNEKEELCHACRNIQAELSSGTLI.

Belongs to the CTU2/NCS2 family.

It is found in the cytoplasm. The protein operates within tRNA modification; 5-methoxycarbonylmethyl-2-thiouridine-tRNA biosynthesis. Functionally, plays a central role in 2-thiolation of mcm(5)S(2)U at tRNA wobble positions of tRNA(Lys), tRNA(Glu) and tRNA(Gln). May act by forming a heterodimer with NCS6/CTU1 that ligates sulfur from thiocarboxylated URM1 onto the uridine of tRNAs at wobble position. In Drosophila mojavensis (Fruit fly), this protein is Cytoplasmic tRNA 2-thiolation protein 2.